The chain runs to 296 residues: Transcription repressor OFP3 (296 aa).

Disordered stretches follow at residues 27 to 115 (MSRS…SANA) and 131 to 196 (PSDQ…AHSS). Over residues 60–69 (LSSTAHHPQA) the composition is skewed to polar residues. Residues 78-88 (SFKRKIKRKTV) are compositionally biased toward basic residues. Over residues 92–115 (SSRLKLSTSSSLNHRSKSSSSANA) the composition is skewed to low complexity. Over residues 136–159 (FVHDPEPHSSIDIKDELSVRKLDD) the composition is skewed to basic and acidic residues. The OVATE domain occupies 228 to 287 (IVLSSVDPEKDFRESMVEMIMENKMREQKDLEDLLACYLSLNSSEYHDVIIKAFENTWLH).

In terms of assembly, interacts with BLH1, BLH3, KNAT5 and KNAT7.

Its subcellular location is the nucleus. In terms of biological role, transcriptional repressor that may regulate multiple aspects of plant growth and development through the regulation of BEL1-LIKE (BLH) and KNOX TALE (KNAT) homeodomain transcription factors. In Arabidopsis thaliana (Mouse-ear cress), this protein is Transcription repressor OFP3 (OFP3).